Consider the following 149-residue polypeptide: NADH-quinone oxidoreductase subunit I 1 (149 aa).

4Fe-4S ferredoxin-type domains follow at residues 51-82 and 93-122; these read LKSF…VQGT and THYV…YSTE. Residues Cys62, Cys65, Cys68, Cys72, Cys102, Cys105, Cys108, and Cys112 each contribute to the [4Fe-4S] cluster site.

Belongs to the complex I 23 kDa subunit family. As to quaternary structure, NDH-1 is composed of 14 different subunits. Subunits NuoA, H, J, K, L, M, N constitute the membrane sector of the complex. Requires [4Fe-4S] cluster as cofactor.

The protein resides in the cell inner membrane. The catalysed reaction is a quinone + NADH + 5 H(+)(in) = a quinol + NAD(+) + 4 H(+)(out). Its function is as follows. NDH-1 shuttles electrons from NADH, via FMN and iron-sulfur (Fe-S) centers, to quinones in the respiratory chain. The immediate electron acceptor for the enzyme in this species is believed to be ubiquinone. Couples the redox reaction to proton translocation (for every two electrons transferred, four hydrogen ions are translocated across the cytoplasmic membrane), and thus conserves the redox energy in a proton gradient. This chain is NADH-quinone oxidoreductase subunit I 1, found in Syntrophobacter fumaroxidans (strain DSM 10017 / MPOB).